Reading from the N-terminus, the 250-residue chain is NADH-quinone oxidoreductase subunit C (250 aa).

Residues 193-250 form a disordered region; sequence GMTPPLPGDEKADMPPIDDPMVTEGPEDTGAGARANAKAAEGTPADPPAMDDEEEDDA. Over residues 222–236 the composition is skewed to low complexity; the sequence is GAGARANAKAAEGTP. Positions 241–250 are enriched in acidic residues; that stretch reads AMDDEEEDDA.

The protein belongs to the complex I 30 kDa subunit family. In terms of assembly, NDH-1 is composed of 14 different subunits. Subunits NuoB, C, D, E, F, and G constitute the peripheral sector of the complex.

The protein resides in the cell inner membrane. The enzyme catalyses a quinone + NADH + 5 H(+)(in) = a quinol + NAD(+) + 4 H(+)(out). Functionally, NDH-1 shuttles electrons from NADH, via FMN and iron-sulfur (Fe-S) centers, to quinones in the respiratory chain. The immediate electron acceptor for the enzyme in this species is believed to be ubiquinone. Couples the redox reaction to proton translocation (for every two electrons transferred, four hydrogen ions are translocated across the cytoplasmic membrane), and thus conserves the redox energy in a proton gradient. The polypeptide is NADH-quinone oxidoreductase subunit C (Erythrobacter litoralis (strain HTCC2594)).